Consider the following 313-residue polypeptide: Guanine nucleotide-binding protein-like 3-like protein (313 aa).

The segment covering 1-14 (MGIKKKRQSKRLTT) has biased composition (basic residues). Positions 1 to 41 (MGIKKKRQSKRLTTRKREGMLKRARANERKKRRMDRKMQAK) are disordered. Basic and acidic residues predominate over residues 15-27 (RKREGMLKRARAN). Residues 95–98 (SKSD), 178–185 (GNPGSGKN), and 212–215 (TLSS) contribute to the GTP site.

It belongs to the MMR1/HSR1 GTP-binding protein family.

Its subcellular location is the nucleus. It localises to the nucleolus. In terms of biological role, required for normal processing of ribosomal pre-rRNA. Required for cell proliferation. Binds GTP. The sequence is that of Guanine nucleotide-binding protein-like 3-like protein from Encephalitozoon cuniculi (strain GB-M1) (Microsporidian parasite).